The following is a 1067-amino-acid chain: Receptor-type guanylate cyclase gcy-10 (1067 aa).

Residues 1–20 (MLKSLLIIVIVFLHRELCDG) form the signal peptide. Topologically, residues 21–438 (IQLILFDNWP…CVAKSSCVNY (418 aa)) are extracellular. N-linked (GlcNAc...) asparagine glycosylation is present at Asn411. Residues 439 to 459 (IPHIIAAVVIVTIIVIAIVII) form a helical membrane-spanning segment. Residues 460–1067 (VKQRRHKLNI…RGSIVPLQKA (608 aa)) are Cytoplasmic-facing. One can recognise a Protein kinase domain in the interval 509–791 (ALTSRRRVFG…ESISTVYPLS (283 aa)). Residues 515-523 (RVFGSYALV) and Lys534 each bind ATP. Residues 859 to 989 (TVMFVQICDF…DTVNFASRMQ (131 aa)) enclose the Guanylate cyclase domain.

Belongs to the adenylyl cyclase class-4/guanylyl cyclase family. Expressed predominantly in AWC but also in AWB, ASI, ASJ and ASK sensory neurons and in I1 interneuron.

Its subcellular location is the cell membrane. The protein localises to the cell projection. It is found in the cilium. It catalyses the reaction GTP = 3',5'-cyclic GMP + diphosphate. Its function is as follows. Guanylate cyclase involved in the production of the second messenger cGMP. Regulates chemotaxis responses toward volatile odorants in AWC sensory neurons and their avoidance in AWB sensory neurons. May be involved in sensitivity to quinine by regulating egl-4 activity through the production of cGMP. Involved in phototransduction in ASJ neurons downstream of G protein coupled-photoreceptor lite-1. Required to maintain the expression of putative olfactory receptor str-2 in AWC neurons in adults. In AWB and AWC sensory neurons, mediates the recognition of food oders which subsequently allows for the detection of preferred food sources. Involved in AWB sensory neuron development and extension during postembryonic development, potentially via mediating localization of tub-1 and PI(4,5)P2 to membrane cilia. The protein is Receptor-type guanylate cyclase gcy-10 of Caenorhabditis elegans.